A 1508-amino-acid chain; its full sequence is Ras guanine nucleotide exchange factor Y (1508 aa).

Disordered regions lie at residues 1 to 73 (MIII…NNNE), 128 to 182 (KVLS…PKSV), 197 to 272 (IDNN…YSTS), 396 to 517 (ILQC…EDED), 565 to 593 (LSENRTKDLNQPSSQFSPSTSPSTNSIPT), 606 to 727 (LPNI…AEPS), 831 to 1021 (NVII…SNKE), and 1153 to 1172 (TNEDEDNSNSNSNSNKTNKN). Composition is skewed to low complexity over residues 9–22 (NINNSNNSNSNNNS) and 33–72 (NNNNTITGKNTNEIMNNNNNSNNNNNNNNNNNNNNNNNNN). Composition is skewed to polar residues over residues 128–150 (KVLSSPSKEVNSLKKSTNGTNTI) and 172–182 (DRTSQDIPKSV). The span at 199 to 216 (NNTTNNNSNNNNNSSLST) shows a compositional bias: low complexity. A compositionally biased stretch (basic and acidic residues) spans 223–232 (DSLETNPIKD). Residues 233-250 (EESEESEESEESKEEEEE) are compositionally biased toward acidic residues. A compositionally biased stretch (low complexity) spans 255–272 (IKTTKTTSETIESSYSTS). Basic and acidic residues predominate over residues 399–409 (CKDDSSSKDQD). Positions 413 to 447 (NNSAGSSGNSSASNSNRNSIAFSSSNHFSSESSQS) are enriched in low complexity. The segment covering 465–475 (PQSPSPSPSPP) has biased composition (pro residues). The segment covering 492–510 (FNQQTNFSVSPTKSPSNEK) has biased composition (polar residues). Composition is skewed to low complexity over residues 574 to 593 (NQPSSQFSPSTSPSTNSIPT), 606 to 660 (LPNI…LTES), 668 to 687 (NNNNNNNKNINNNNNNNNNN), 831 to 855 (NVIISNNTGNNNNNNNSSKNNNTVK), 862 to 891 (NKSSSSSQNNSPPSDFSLSVSPSPCSSLTP), 942 to 984 (SLWS…SPPT), 993 to 1019 (ITTGSSPPSTAGTSPPNDNGNNNNNSN), and 1160 to 1172 (SNSNSNSNKTNKN). A coiled-coil region spans residues 659–686 (ESLKTRIEENNNNNNNKNINNNNNNNNN). The region spanning 1074-1234 (NRIKVRSASL…IILKIIDRKA (161 aa)) is the N-terminal Ras-GEF domain. One can recognise a Ras-GEF domain in the interval 1278–1508 (DDLEIARQLT…LYKQSKIIEP (231 aa)).

In terms of biological role, promotes the exchange of Ras-bound GDP by GTP. The chain is Ras guanine nucleotide exchange factor Y (gefY) from Dictyostelium discoideum (Social amoeba).